A 575-amino-acid polypeptide reads, in one-letter code: Alpha-(1,6)-fucosyltransferase (575 aa).

The Cytoplasmic segment spans residues 1–9; that stretch reads MRPWTGSWR. The chain crosses the membrane as a helical; Signal-anchor for type II membrane protein span at residues 10 to 30; the sequence is WIMLILFAWGTLLFYIGGHLV. Topologically, residues 31–575 are lumenal; it reads RDNDHPDHSS…KYPTYPEAEK (545 aa). 3 cysteine pairs are disulfide-bonded: cysteine 204/cysteine 266, cysteine 212/cysteine 230, and cysteine 218/cysteine 222. The 288-residue stretch at 206–493 folds into the GT23 domain; the sequence is KAKKLVCNIN…PDASANFHSL (288 aa). The residue at position 278 (serine 278) is a Phosphoserine. An SH3-binding motif is present at residues 299–305; the sequence is PRPPYLP. Positions 365 to 366 are important for donor substrate binding; sequence RR. Cysteine 465 and cysteine 472 form a disulfide bridge. Residues 502–563 form the SH3 domain; that stretch reads QNAHNQIAIY…PSYKVREKIE (62 aa).

This sequence belongs to the glycosyltransferase 23 family. Tyrosine phosphorylated by PKDCC/VLK.

The protein resides in the golgi apparatus. It is found in the golgi stack membrane. It catalyses the reaction N(4)-{beta-D-GlcNAc-(1-&gt;2)-alpha-D-Man-(1-&gt;3)-[beta-D-GlcNAc-(1-&gt;2)-alpha-D-Man-(1-&gt;6)]-beta-D-Man-(1-&gt;4)-beta-D-GlcNAc-(1-&gt;4)-beta-D-GlcNAc}-L-asparaginyl-[protein] + GDP-beta-L-fucose = an N(4)-{beta-D-GlcNAc-(1-&gt;2)-alpha-D-Man-(1-&gt;3)-[beta-D-GlcNAc-(1-&gt;2)-alpha-D-Man-(1-&gt;6)]-beta-D-Man-(1-&gt;4)-beta-D-GlcNAc-(1-&gt;4)-[alpha-L-Fuc-(1-&gt;6)]-beta-D-GlcNAc}-L-asparaginyl-[protein] + GDP + H(+). Its pathway is protein modification; protein glycosylation. Its function is as follows. Catalyzes the addition of fucose in alpha 1-6 linkage to the first GlcNAc residue, next to the peptide chains in N-glycans. The chain is Alpha-(1,6)-fucosyltransferase (FUT8) from Canis lupus familiaris (Dog).